The sequence spans 335 residues: Flagellar P-ring protein (335 aa).

An N-terminal signal peptide occupies residues 1 to 17 (MNKPMLMLITFATSLLA).

The protein belongs to the FlgI family. The basal body constitutes a major portion of the flagellar organelle and consists of four rings (L,P,S, and M) mounted on a central rod.

It localises to the periplasm. The protein localises to the bacterial flagellum basal body. Assembles around the rod to form the L-ring and probably protects the motor/basal body from shearing forces during rotation. The polypeptide is Flagellar P-ring protein (Borreliella burgdorferi (strain ZS7) (Borrelia burgdorferi)).